The following is an 855-amino-acid chain: Nuclear valosin-containing protein-like (855 aa).

An interaction with RPL5 region spans residues 1 to 219 (MKPRPGVFVD…SLLESDKKRK (219 aa)). The Nucleolar localization signal motif lies at 49–52 (RRKR). Lys70 is modified (N6-acetyllysine). Residues 83-234 (LAKRARQDEE…KGNKRKTENL (152 aa)) form a disordered region. The Nuclear localization signal signature appears at 85–88 (KRAR). Positions 90–110 (DEEDEYTESYSDDDSNMEDYP) are enriched in acidic residues. 2 stretches are compositionally biased toward polar residues: residues 113–123 (QSANPMNSSLL) and 131–157 (SESV…SKTG). Ser133 is subject to Phosphoserine. Thr137 carries the phosphothreonine modification. At Lys155 the chain carries N6-acetyllysine. Ser190 bears the Phosphoserine mark. Lys207 participates in a covalent cross-link: Glycyl lysine isopeptide (Lys-Gly) (interchain with G-Cter in SUMO2). Residues Ser210 and Ser214 each carry the phosphoserine modification. Basic residues predominate over residues 217–228 (KRKGRAKGKGNK). The Nuclear localization signal signature appears at 217–231 (KRKGRAKGKGNKRKT). Residues 266–473 (VGGNDATLKE…LTPGFVGADL (208 aa)) form an interaction with WDR74 region. Position 304 to 311 (304 to 311 (GPPGCGKT)) interacts with ATP. The disordered stretch occupies residues 496-523 (QKKKPEIEGLPSEGDQEERLGAEPTSET). 621–628 (GPPGCGKT) lines the ATP pocket.

It belongs to the AAA ATPase family. As to quaternary structure, interacts with NCL/nucleolin. Isoform 1 and isoform 2 interact with TERT and isoform 1 exhibits a higher binding affinity for TERT compared to isoform 2. Isoform 1 interacts with MTREX in an ATP-dependent manner; the interaction is required to associate NVL with nuclear RNA exosome. Isoform 1 interacts with RPL5 in an ATP-dependent manner. Interacts with WDR74 (through WDR repeats); the interaction is independent of RNA or pre-60S ribosome particles.

It localises to the nucleus. It is found in the nucleolus. The protein resides in the nucleoplasm. Its function is as follows. Participates in the assembly of the telomerase holoenzyme and effecting of telomerase activity via its interaction with TERT. Involved in both early and late stages of the pre-rRNA processing pathways. Spatiotemporally regulates 60S ribosomal subunit biogenesis in the nucleolus. Catalyzes the release of specific assembly factors, such as WDR74, from pre-60S ribosomal particles through the ATPase activity. This is Nuclear valosin-containing protein-like from Mus musculus (Mouse).